The sequence spans 88 residues: MFGQRQSMIVYLHSLKHAKILRKYGNIHYISKRLKYAVVYCDMEQIEHMMQKLNKLPFVKKVEQSYRPFLKTEFENSRPDRAKEYDYS.

This sequence belongs to the UPF0298 family.

The protein localises to the cytoplasm. This is UPF0298 protein BcerKBAB4_3759 from Bacillus mycoides (strain KBAB4) (Bacillus weihenstephanensis).